Consider the following 468-residue polypeptide: Protein phosphatase ppm-1.A (468 aa).

The tract at residues 1 to 23 (MTISRADLQIASSAEPKTHGNLN) is disordered. One can recognise a PPM-type phosphatase domain in the interval 106 to 381 (RYGMSSMQGW…DNMTMVVVCF (276 aa)). Mn(2+)-binding residues include Asp-145, Gly-146, Asp-329, and Asp-372.

This sequence belongs to the PP2C family. Requires Mg(2+) as cofactor. Mn(2+) is required as a cofactor. Expressed in neurons of the nerve ring and motor neurons of the ventral nerve cord.

It localises to the synapse. It catalyses the reaction O-phospho-L-seryl-[protein] + H2O = L-seryl-[protein] + phosphate. The catalysed reaction is O-phospho-L-threonyl-[protein] + H2O = L-threonyl-[protein] + phosphate. Probable phosphatase which regulates axon termination in ALM and PLM neurons, and synaptic branch extension and/or stabilization in PLM neurons. Plays a role in synapse formation in GABAergic DD motor neurons probably by dephosphorylating pmk-3 thereby negatively regulating a MAP kinase pathway that includes dlk-1, mkk-4 and pmk-3. This chain is Protein phosphatase ppm-1.A, found in Caenorhabditis elegans.